A 121-amino-acid polypeptide reads, in one-letter code: Large ribosomal subunit protein bL12 (121 aa).

This sequence belongs to the bacterial ribosomal protein bL12 family. In terms of assembly, homodimer. Part of the ribosomal stalk of the 50S ribosomal subunit. Forms a multimeric L10(L12)X complex, where L10 forms an elongated spine to which 2 to 4 L12 dimers bind in a sequential fashion. Binds GTP-bound translation factors.

Functionally, forms part of the ribosomal stalk which helps the ribosome interact with GTP-bound translation factors. Is thus essential for accurate translation. In Shewanella halifaxensis (strain HAW-EB4), this protein is Large ribosomal subunit protein bL12.